The chain runs to 357 residues: Major outer membrane protein P.IB (357 aa).

Positions 1–19 (MKKSLIALTLAALPVAAMA) are cleaved as a signal peptide.

The protein belongs to the Gram-negative porin family. In terms of assembly, homotrimer.

It is found in the cell outer membrane. Functionally, serves as a slightly cation selective porin. The chain is Major outer membrane protein P.IB (por) from Neisseria sicca.